We begin with the raw amino-acid sequence, 510 residues long: Histidine ammonia-lyase (510 aa).

Positions Ala144–Gly146 form a cross-link, 5-imidazolinone (Ala-Gly). 2,3-didehydroalanine (Ser) is present on Ser145.

The protein belongs to the PAL/histidase family. In terms of processing, contains an active site 4-methylidene-imidazol-5-one (MIO), which is formed autocatalytically by cyclization and dehydration of residues Ala-Ser-Gly.

The protein resides in the cytoplasm. The catalysed reaction is L-histidine = trans-urocanate + NH4(+). The protein operates within amino-acid degradation; L-histidine degradation into L-glutamate; N-formimidoyl-L-glutamate from L-histidine: step 1/3. In Chromobacterium violaceum (strain ATCC 12472 / DSM 30191 / JCM 1249 / CCUG 213 / NBRC 12614 / NCIMB 9131 / NCTC 9757 / MK), this protein is Histidine ammonia-lyase.